The chain runs to 1356 residues: Transmembrane protein 94 (1356 aa).

Residues 1 to 64 (MDLKEKHLGE…FLHHSNRCSC (64 aa)) are Cytoplasmic-facing. The helical transmembrane segment at 65–85 (FHWPGASLMLLAVLLLLGCCG) threads the bilayer. Over 86-92 (GQPAGSR) the chain is Lumenal. The chain crosses the membrane as a helical span at residues 93-113 (GVGLVNASALFLLLLLNLVLI). At 114–273 (GRQDRLKRRE…RPVTALDNER (160 aa)) the chain is on the cytoplasmic side. Phosphoserine is present on residues Ser221 and Ser225. A helical membrane pass occupies residues 274 to 294 (FTVQSVMLHYAVPVVLAGFLI). Residues 295–320 (TNALRFIFSAPGVTSWQYTLLQLQVN) lie on the Lumenal side of the membrane. Residues 321 to 341 (GVLPILPLLFPVLWVLATACG) traverse the membrane as a helical segment. Residues 342–1092 (EARVLAQMSK…RHATYGIRKC (751 aa)) lie on the Cytoplasmic side of the membrane. Residues 417–422 (DKQGIL) carry the DKQGIL motif. Disordered stretches follow at residues 439 to 461 (VEPP…FCHP) and 483 to 541 (EQER…ESDP). The segment covering 440 to 449 (EPPHSSHEDL) has biased composition (basic and acidic residues). 3 positions are modified to phosphoserine: Ser444, Ser445, and Ser454. The span at 502–511 (HHKAHGRSKH) shows a compositional bias: basic residues. Phosphoserine is present on residues Ser513, Ser518, Ser798, and Ser941. Residues 1093-1113 (FLFLLQCQLTLVVIQFLSCLV) form a helical membrane-spanning segment. Residues 1114–1120 (QLPPLLS) are Lumenal-facing. A helical transmembrane segment spans residues 1121–1141 (TTDILWLSCFCYPLLSISLLG). Residues 1142–1167 (KPPHSSIMSMATGKNLQSIPKKTQHY) are Cytoplasmic-facing. A helical membrane pass occupies residues 1168 to 1188 (FLLCFLLKFSLTISSCLICFG). Residues 1189-1228 (FTLQSFCDSSRDRNLTNCSSVMLPSNDDRAPAWFEDFANG) are Lumenal-facing. N-linked (GlcNAc...) asparagine glycans are attached at residues Asn1202 and Asn1205. The helical transmembrane segment at 1229-1249 (LLSAQKLTAALIVLHTVFISI) threads the bilayer. Topologically, residues 1250 to 1261 (THVHRTKPLWRK) are cytoplasmic. Residues 1262–1282 (SPLTNLWWAVTVPVVLLGQVV) traverse the membrane as a helical segment. The Lumenal segment spans residues 1283–1306 (QTAVDLQLWTHRDSHVHFGLEDVP). A helical membrane pass occupies residues 1307–1327 (LLTWLLGCLSLVLVVVTNEIV). Topologically, residues 1328 to 1356 (KLHEIRVRVRYQKRQKLQFETKLGMNSPF) are cytoplasmic. The short motif at 1351–1353 (GMN) is the GMN; metal-binding motif element.

In terms of assembly, forms homooligomers. As to expression, expressed ubiquitously.

It localises to the endoplasmic reticulum membrane. Could function in the uptake of Mg(2+) from the cytosol into the endoplasmic reticulum and regulate intracellular Mg(2+) homeostasis. This is Transmembrane protein 94 from Homo sapiens (Human).